The chain runs to 447 residues: KICSTOR complex protein ITFG2 (447 aa).

An FG-GAP 1; atypical repeat occupies 19 to 48; the sequence is FPHAICLGDVDNDTLNELVVGDTSGKVSVY. Phosphoserine is present on serine 104. An FG-GAP 2; atypical repeat occupies 126–155; the sequence is NTKVMLISDIDGDGCRELVVGYTDRVVRAF. The residue at position 220 (serine 220) is a Phosphoserine.

Part of the KICSTOR complex composed of KPTN, ITFG2, KICS2 and SZT2. SZT2 probably serves as a link between the other three proteins in the KICSTOR complex and may mediate the direct interaction with the GATOR complex via GATOR1. The KICSTOR complex interacts directly with the GATOR1 complex and most probably indirectly with the GATOR2 complex in an amino acid-independent manner.

It localises to the lysosome membrane. In terms of biological role, as part of the KICSTOR complex functions in the amino acid-sensing branch of the TORC1 signaling pathway. Recruits, in an amino acid-independent manner, the GATOR1 complex to the lysosomal membranes and allows its interaction with GATOR2 and the RAG GTPases. Functions upstream of the RAG GTPases and is required to negatively regulate mTORC1 signaling in absence of amino acids. In absence of the KICSTOR complex mTORC1 is constitutively localized to the lysosome and activated. The KICSTOR complex is also probably involved in the regulation of mTORC1 by glucose. The sequence is that of KICSTOR complex protein ITFG2 from Homo sapiens (Human).